Here is a 215-residue protein sequence, read N- to C-terminus: Cytochrome b6 (215 aa).

The chain crosses the membrane as a helical span at residues 32–52 (IFYCLGGITLTCFLVQVATGF). Residue cysteine 35 coordinates heme c. Residues histidine 86 and histidine 100 each coordinate heme b. A run of 3 helical transmembrane segments spans residues 90-110 (ASMMVLMMILHVFRVYLTGGF), 116-136 (LTWVTGVILAVLTVSFGVTGY), and 186-206 (LHTFVLPLLTAVFMLMHFLMI). 2 residues coordinate heme b: histidine 187 and histidine 202.

It belongs to the cytochrome b family. PetB subfamily. As to quaternary structure, the 4 large subunits of the cytochrome b6-f complex are cytochrome b6, subunit IV (17 kDa polypeptide, PetD), cytochrome f and the Rieske protein, while the 4 small subunits are PetG, PetL, PetM and PetN. The complex functions as a dimer. The cofactor is heme b. It depends on heme c as a cofactor.

Its subcellular location is the plastid. The protein resides in the chloroplast thylakoid membrane. Component of the cytochrome b6-f complex, which mediates electron transfer between photosystem II (PSII) and photosystem I (PSI), cyclic electron flow around PSI, and state transitions. The sequence is that of Cytochrome b6 from Klebsormidium bilatum (Filamentous green alga).